We begin with the raw amino-acid sequence, 238 residues long: Probable transcriptional regulatory protein CPn_0573/CP_0176/CPj0573/CpB0595 (238 aa).

Residues 1 to 20 are disordered; sequence MAGHSKWANTKHRKERADHK. Residues 9–20 are compositionally biased toward basic residues; that stretch reads NTKHRKERADHK.

It belongs to the TACO1 family.

Its subcellular location is the cytoplasm. In Chlamydia pneumoniae (Chlamydophila pneumoniae), this protein is Probable transcriptional regulatory protein CPn_0573/CP_0176/CPj0573/CpB0595.